The primary structure comprises 413 residues: Arginine biosynthesis bifunctional protein ArgJ (413 aa).

Substrate-binding residues include threonine 158, lysine 184, threonine 195, glutamate 285, asparagine 408, and serine 413. The active-site Nucleophile is threonine 195.

It belongs to the ArgJ family. Heterotetramer of two alpha and two beta chains.

The protein localises to the cytoplasm. The catalysed reaction is N(2)-acetyl-L-ornithine + L-glutamate = N-acetyl-L-glutamate + L-ornithine. The enzyme catalyses L-glutamate + acetyl-CoA = N-acetyl-L-glutamate + CoA + H(+). The protein operates within amino-acid biosynthesis; L-arginine biosynthesis; L-ornithine and N-acetyl-L-glutamate from L-glutamate and N(2)-acetyl-L-ornithine (cyclic): step 1/1. Its pathway is amino-acid biosynthesis; L-arginine biosynthesis; N(2)-acetyl-L-ornithine from L-glutamate: step 1/4. Its function is as follows. Catalyzes two activities which are involved in the cyclic version of arginine biosynthesis: the synthesis of N-acetylglutamate from glutamate and acetyl-CoA as the acetyl donor, and of ornithine by transacetylation between N(2)-acetylornithine and glutamate. This is Arginine biosynthesis bifunctional protein ArgJ from Agrobacterium fabrum (strain C58 / ATCC 33970) (Agrobacterium tumefaciens (strain C58)).